The chain runs to 252 residues: Phosphate import ATP-binding protein PstB 1 (252 aa).

In terms of domain architecture, ABC transporter spans 6–247 (LQIRDLSVYY…PKRKETEDYI (242 aa)). 38-45 (GPSGSGKS) serves as a coordination point for ATP.

This sequence belongs to the ABC transporter superfamily. Phosphate importer (TC 3.A.1.7) family. The complex is composed of two ATP-binding proteins (PstB), two transmembrane proteins (PstC and PstA) and a solute-binding protein (PstS).

Its subcellular location is the cell membrane. The enzyme catalyses phosphate(out) + ATP + H2O = ADP + 2 phosphate(in) + H(+). Its function is as follows. Part of the ABC transporter complex PstSACB involved in phosphate import. Responsible for energy coupling to the transport system. The sequence is that of Phosphate import ATP-binding protein PstB 1 from Streptococcus pyogenes serotype M1.